We begin with the raw amino-acid sequence, 503 residues long: ATP synthase subunit alpha, chloroplastic (503 aa).

170–177 (GDRQTGKT) contributes to the ATP binding site.

This sequence belongs to the ATPase alpha/beta chains family. F-type ATPases have 2 components, CF(1) - the catalytic core - and CF(0) - the membrane proton channel. CF(1) has five subunits: alpha(3), beta(3), gamma(1), delta(1), epsilon(1). CF(0) has four main subunits: a, b, b' and c.

It localises to the plastid. The protein resides in the chloroplast thylakoid membrane. The catalysed reaction is ATP + H2O + 4 H(+)(in) = ADP + phosphate + 5 H(+)(out). Produces ATP from ADP in the presence of a proton gradient across the membrane. The alpha chain is a regulatory subunit. The protein is ATP synthase subunit alpha, chloroplastic of Thalassiosira pseudonana (Marine diatom).